The primary structure comprises 467 residues: Putative pentatricopeptide repeat-containing protein At1g10330 (467 aa).

PPR repeat units follow at residues 50-84, 85-119, 120-150, 151-181, 182-216, 220-256, 257-287, 288-322, 323-358, and 359-389; these read TKCV…HVQP, NNLT…GFLW, DPFV…ILNP, CVVA…MPVT, DVVS…ERAV, NEAT…EIIL, TTTL…IRDK, KVCA…YVHP, NGIT…KIIP, and TSEH…LPFE. The type E motif; degenerate stretch occupies residues 394-467; sequence VLGALLGACK…RKIPAYSVLT (74 aa).

Belongs to the PPR family. PCMP-E subfamily.

This chain is Putative pentatricopeptide repeat-containing protein At1g10330 (PCMP-E71), found in Arabidopsis thaliana (Mouse-ear cress).